Here is a 904-residue protein sequence, read N- to C-terminus: Dynamin-like protein C (904 aa).

Residues 44 to 102 (IAEAMALKMHEEEKKKREEKKRKRDNEELLSKQVRTKLENERKKLDDSESINASTNQEL) adopt a coiled-coil conformation. A disordered region spans residues 53–93 (HEEEKKKREEKKRKRDNEELLSKQVRTKLENERKKLDDSES). A compositionally biased stretch (basic and acidic residues) spans 67–90 (RDNEELLSKQVRTKLENERKKLDD). The 323-residue stretch at 119–441 (SFDTPELVVV…HEKYQQNLLP (323 aa)) folds into the Dynamin-type G domain. Positions 129–136 (GMQSDGKS) are G1 motif. 129 to 136 (GMQSDGKS) is a GTP binding site. Positions 155–157 (GTR) are G2 motif. Residues 169–227 (SKQQPSCRFKKEDYSNSYGGSSSSTSTTSGNSNHNTDKQQNVSSSQGGGGGSNNLNEDK) are disordered. A compositionally biased stretch (low complexity) spans 183-213 (SNSYGGSSSSTSTTSGNSNHNTDKQQNVSSS). Residues 278–281 (DTPG) form a G3 motif region. Residues 278-282 (DTPGF) and 343-346 (TKFD) contribute to the GTP site. The tract at residues 343 to 346 (TKFD) is G4 motif. A G5 motif region spans residues 378–381 (LPLK). Positions 781 to 811 (EMFQLGLKELENKLHKLEFQLIDCKKNRDKF) form a coiled coil. 2 disordered regions span residues 821-840 (SLNQ…ASSS) and 853-904 (NGKF…FDQN). The span at 853–876 (NGKFSTPDKNSLTMSPFTSPFTQS) shows a compositional bias: polar residues. Over residues 877 to 891 (NYHQHNNNNYQINQQ) the composition is skewed to low complexity.

Belongs to the TRAFAC class dynamin-like GTPase superfamily. Dynamin/Fzo/YdjA family.

It is found in the cytoplasm. It carries out the reaction GTP + H2O = GDP + phosphate + H(+). Functionally, involved in cytokinesis. May hydrolyze GTP. The protein is Dynamin-like protein C (dlpC) of Dictyostelium discoideum (Social amoeba).